Consider the following 217-residue polypeptide: Thiosulfate dehydrogenase electron acceptor (217 aa).

The N-terminal stretch at Met-1–Ala-28 is a signal peptide. Cytochrome c domains follow at residues Ala-29–Lys-104 and Ala-116–Pro-206. The heme c site is built by Cys-37, Cys-40, His-41, Cys-137, Cys-140, and His-141.

Post-translationally, binds 2 heme c groups covalently per subunit.

In terms of biological role, acts as an electron acceptor for the thiosulfate dehydrogenase TsdA. The polypeptide is Thiosulfate dehydrogenase electron acceptor (tsdB) (Thiomonas intermedia (strain K12) (Thiobacillus intermedius)).